The chain runs to 312 residues: 2,3-dihydroxyphenylpropionate/2,3-dihydroxicinnamic acid 1,2-dioxygenase (312 aa).

His-115 serves as the catalytic Proton donor. His-179 (proton acceptor) is an active-site residue.

The protein belongs to the LigB/MhpB extradiol dioxygenase family. In terms of assembly, homotetramer. Fe(2+) serves as cofactor.

It carries out the reaction 3-(2,3-dihydroxyphenyl)propanoate + O2 = (2Z,4E)-2-hydroxy-6-oxonona-2,4-dienedioate + H(+). It catalyses the reaction (2E)-3-(2,3-dihydroxyphenyl)prop-2-enoate + O2 = (2Z,4E,7E)-2-hydroxy-6-oxonona-2,4,7-trienedioate + H(+). The protein operates within aromatic compound metabolism; 3-phenylpropanoate degradation. Catalyzes the non-heme iron(II)-dependent oxidative cleavage of 2,3-dihydroxyphenylpropionic acid and 2,3-dihydroxicinnamic acid into 2-hydroxy-6-ketononadienedioate and 2-hydroxy-6-ketononatrienedioate, respectively. The polypeptide is 2,3-dihydroxyphenylpropionate/2,3-dihydroxicinnamic acid 1,2-dioxygenase (Mycolicibacterium paratuberculosis (strain ATCC BAA-968 / K-10) (Mycobacterium paratuberculosis)).